The chain runs to 397 residues: Elongation factor Tu 1 (397 aa).

Residues 10 to 206 (KPHVNIGTIG…AVDENIPQPE (197 aa)) form the tr-type G domain. The tract at residues 19–26 (GHIDHGKT) is G1. 19–26 (GHIDHGKT) serves as a coordination point for GTP. Residue T26 coordinates Mg(2+). The G2 stretch occupies residues 62–66 (GITIS). Residues 83–86 (DCPG) form a G3 region. GTP contacts are provided by residues 83–87 (DCPGH) and 138–141 (NKAD). The tract at residues 138–141 (NKAD) is G4. Positions 176–178 (SAL) are G5.

Belongs to the TRAFAC class translation factor GTPase superfamily. Classic translation factor GTPase family. EF-Tu/EF-1A subfamily. As to quaternary structure, monomer.

Its subcellular location is the cytoplasm. The catalysed reaction is GTP + H2O = GDP + phosphate + H(+). Functionally, GTP hydrolase that promotes the GTP-dependent binding of aminoacyl-tRNA to the A-site of ribosomes during protein biosynthesis. The sequence is that of Elongation factor Tu 1 from Streptomyces avermitilis (strain ATCC 31267 / DSM 46492 / JCM 5070 / NBRC 14893 / NCIMB 12804 / NRRL 8165 / MA-4680).